We begin with the raw amino-acid sequence, 392 residues long: Phosphoglycerate kinase (392 aa).

Substrate-binding positions include 21-23, Arg36, 59-62, Arg114, and Arg147; these read DMN and HLGR. ATP-binding positions include Lys198, Glu320, and 346–349; that span reads GGDT.

Belongs to the phosphoglycerate kinase family. Monomer.

It localises to the cytoplasm. It catalyses the reaction (2R)-3-phosphoglycerate + ATP = (2R)-3-phospho-glyceroyl phosphate + ADP. The protein operates within carbohydrate degradation; glycolysis; pyruvate from D-glyceraldehyde 3-phosphate: step 2/5. This is Phosphoglycerate kinase from Neisseria meningitidis serogroup C (strain 053442).